A 302-amino-acid polypeptide reads, in one-letter code: Forkhead box protein R2 (302 aa).

The fork-head DNA-binding region spans 183–285 (RPPLNYSHLV…RVLAYARRES (103 aa)).

The protein resides in the nucleus. The protein is Forkhead box protein R2 (Foxr2) of Mus musculus (Mouse).